Reading from the N-terminus, the 143-residue chain is 18 kDa heat shock protein (143 aa).

Residues 23–135 (TWSRPTAMPM…KRRRVKVGQG (113 aa)) form the sHSP domain.

The protein belongs to the small heat shock protein (HSP20) family.

This Streptomyces albus G protein is 18 kDa heat shock protein (hsp18).